Consider the following 311-residue polypeptide: Homeobox protein knotted-1-like 10 (311 aa).

Disordered regions lie at residues 1-45 (MEDL…PATT) and 153-184 (LCGGAPPPTDNSDEMVGSSEDEPCSGDADAAD). Over residues 12–22 (SRGGGGGGGGA) the composition is skewed to gly residues. Residues 197–217 (ELKEMLLKKYSGCLSRLRSEF) form the ELK domain. Residues 218-281 (LKKRKKGKLP…NQRKRHWKPS (64 aa)) constitute a DNA-binding region (homeobox; TALE-type).

It belongs to the TALE/KNOX homeobox family.

The protein localises to the nucleus. In terms of biological role, probable transcription factor that may be involved in shoot formation during embryogenesis. The sequence is that of Homeobox protein knotted-1-like 10 (OSH71) from Oryza sativa subsp. indica (Rice).